Consider the following 121-residue polypeptide: MYIYWILLGLAVATEITGTLSMKWASVSEGNGGFILMLVMISLSYIFLSFAVKKIALGVAYALWEGIGILFITLFSVLLFDESLSLMKIAGLTTLVAGIVLIKSGTRKARKPELEVNHGAV.

M1 is a topological domain (cytoplasmic). A helical membrane pass occupies residues 2 to 22 (YIYWILLGLAVATEITGTLSM). The Periplasmic portion of the chain corresponds to 23 to 31 (KWASVSEGN). The chain crosses the membrane as a helical span at residues 32–52 (GGFILMLVMISLSYIFLSFAV). At 53-54 (KK) the chain is on the cytoplasmic side. The helical transmembrane segment at 55-75 (IALGVAYALWEGIGILFITLF) threads the bilayer. Residues 76–81 (SVLLFD) lie on the Periplasmic side of the membrane. A helical transmembrane segment spans residues 82-102 (ESLSLMKIAGLTTLVAGIVLI). At 103-121 (KSGTRKARKPELEVNHGAV) the chain is on the cytoplasmic side.

The protein belongs to the drug/metabolite transporter (DMT) superfamily. Small multidrug resistance (SMR) (TC 2.A.7.1) family. MdtJ subfamily. Forms a complex with MdtI.

It is found in the cell inner membrane. In terms of biological role, catalyzes the excretion of spermidine. In Escherichia coli O6:H1 (strain CFT073 / ATCC 700928 / UPEC), this protein is Spermidine export protein MdtJ (mdtJ).